Reading from the N-terminus, the 279-residue chain is MVLEAVLLGIVQGITEFLPISSTAHMYILAKLLNLHVPGRFFLSSVQLGTSFALILYFFKDVKGIISETSRSIYSFIQFGIRQKQGKRNEYTRLGLLLVTGTIPVVLLGFLLVRFVPDGFFSAARNLFTMGVALIVFGLLLGFADALFRRKKGNIFQITFIESVLIGAAQVFAIIPGVSRSGITITTARFLNFDRQLAVRFSFLLSLPVTFIGGMYGLVAGPDTDYYSLGYSLIGAIVSFVVGLLVVSALLRIISKTTFVLFVYYRVLFGLFLVIVSFF.

The next 8 helical transmembrane spans lie at 1-21 (MVLE…LPIS), 39-59 (GRFF…LYFF), 96-116 (LLLV…VRFV), 128-148 (FTMG…DALF), 155-175 (IFQI…FAII), 201-221 (FSFL…LVAG), 231-251 (YSLI…SALL), and 259-279 (FVLF…VSFF).

This sequence belongs to the UppP family.

It localises to the cell membrane. The enzyme catalyses di-trans,octa-cis-undecaprenyl diphosphate + H2O = di-trans,octa-cis-undecaprenyl phosphate + phosphate + H(+). Catalyzes the dephosphorylation of undecaprenyl diphosphate (UPP). Confers resistance to bacitracin. The protein is Undecaprenyl-diphosphatase of Tropheryma whipplei (strain Twist) (Whipple's bacillus).